Reading from the N-terminus, the 314-residue chain is Dihydroorotate dehydrogenase B (NAD(+)), catalytic subunit (314 aa).

Residues Lys55, Asn79 to Leu83, and Asn136 contribute to the substrate site. Lys55–Ser56 provides a ligand contact to FMN. Position 136 (Asn136) interacts with FMN. Cys139 functions as the Nucleophile in the catalytic mechanism. FMN contacts are provided by Lys174 and Ile200. Substrate is bound at residue Asn201–Thr202. FMN is bound by residues Gly226, Gly252–Gly253, and Gly274–Ser275.

The protein belongs to the dihydroorotate dehydrogenase family. Type 1 subfamily. As to quaternary structure, heterotetramer of 2 PyrK and 2 PyrD type B subunits. FMN serves as cofactor.

The protein localises to the cytoplasm. It catalyses the reaction (S)-dihydroorotate + NAD(+) = orotate + NADH + H(+). It functions in the pathway pyrimidine metabolism; UMP biosynthesis via de novo pathway; orotate from (S)-dihydroorotate (NAD(+) route): step 1/1. Functionally, catalyzes the conversion of dihydroorotate to orotate with NAD(+) as electron acceptor. This Methanosarcina mazei (strain ATCC BAA-159 / DSM 3647 / Goe1 / Go1 / JCM 11833 / OCM 88) (Methanosarcina frisia) protein is Dihydroorotate dehydrogenase B (NAD(+)), catalytic subunit (pyrD).